Reading from the N-terminus, the 155-residue chain is SsrA-binding protein (155 aa).

Belongs to the SmpB family.

Its subcellular location is the cytoplasm. Its function is as follows. Required for rescue of stalled ribosomes mediated by trans-translation. Binds to transfer-messenger RNA (tmRNA), required for stable association of tmRNA with ribosomes. tmRNA and SmpB together mimic tRNA shape, replacing the anticodon stem-loop with SmpB. tmRNA is encoded by the ssrA gene; the 2 termini fold to resemble tRNA(Ala) and it encodes a 'tag peptide', a short internal open reading frame. During trans-translation Ala-aminoacylated tmRNA acts like a tRNA, entering the A-site of stalled ribosomes, displacing the stalled mRNA. The ribosome then switches to translate the ORF on the tmRNA; the nascent peptide is terminated with the 'tag peptide' encoded by the tmRNA and targeted for degradation. The ribosome is freed to recommence translation, which seems to be the essential function of trans-translation. The chain is SsrA-binding protein from Lawsonia intracellularis (strain PHE/MN1-00).